Consider the following 379-residue polypeptide: Pentatricopeptide repeat-containing protein At3g25210, mitochondrial (379 aa).

6 PPR repeats span residues 142 to 177 (SVPLYNCIIRFCCGRKFLFNRAFDVYNKMLRSDDSK), 179 to 221 (DLET…GVIP), 222 to 256 (DTFVLNMIIKAYAKCLEVDEAIRVFKEMALYGSEP), 257 to 291 (NAYTYSYLVKGVCEKGRVGQGLGFYKEMQVKGMVP), 292 to 326 (NGSCYMVLICSLSMERRLDEAVEVVYDMLANSLSP), and 327 to 361 (DMLTYNTVLTELCRGGRGSEALEMVEEWKKRDPVM).

Belongs to the PPR family. P subfamily.

Its subcellular location is the mitochondrion. This Arabidopsis thaliana (Mouse-ear cress) protein is Pentatricopeptide repeat-containing protein At3g25210, mitochondrial.